Here is a 190-residue protein sequence, read N- to C-terminus: Threonylcarbamoyl-AMP synthase (190 aa).

One can recognise a YrdC-like domain in the interval 7–190 (GDAIAAAIDV…ALTGELFRQG (184 aa)).

The protein belongs to the SUA5 family. TsaC subfamily.

Its subcellular location is the cytoplasm. The catalysed reaction is L-threonine + hydrogencarbonate + ATP = L-threonylcarbamoyladenylate + diphosphate + H2O. Required for the formation of a threonylcarbamoyl group on adenosine at position 37 (t(6)A37) in tRNAs that read codons beginning with adenine. Catalyzes the conversion of L-threonine, HCO(3)(-)/CO(2) and ATP to give threonylcarbamoyl-AMP (TC-AMP) as the acyladenylate intermediate, with the release of diphosphate. The sequence is that of Threonylcarbamoyl-AMP synthase from Escherichia coli O157:H7.